Reading from the N-terminus, the 181-residue chain is Protein Syd (181 aa).

The protein belongs to the Syd family.

It is found in the cell inner membrane. In terms of biological role, interacts with the SecY protein in vivo. May bind preferentially to an uncomplexed state of SecY, thus functioning either as a chelating agent for excess SecY in the cell or as a regulatory factor that negatively controls the translocase function. The polypeptide is Protein Syd (Escherichia coli O157:H7).